The sequence spans 65 residues: Large ribosomal subunit protein bL35 (65 aa).

This sequence belongs to the bacterial ribosomal protein bL35 family.

The chain is Large ribosomal subunit protein bL35 from Magnetococcus marinus (strain ATCC BAA-1437 / JCM 17883 / MC-1).